A 185-amino-acid polypeptide reads, in one-letter code: Ribosome-recycling factor (185 aa).

Residues 128–158 (VRNTRQDANNKVKKLEKDKEISEDESKKAQE) are disordered.

Belongs to the RRF family.

It localises to the cytoplasm. Its function is as follows. Responsible for the release of ribosomes from messenger RNA at the termination of protein biosynthesis. May increase the efficiency of translation by recycling ribosomes from one round of translation to another. The sequence is that of Ribosome-recycling factor from Helicobacter pylori (strain J99 / ATCC 700824) (Campylobacter pylori J99).